A 143-amino-acid polypeptide reads, in one-letter code: Transcriptional regulator MraZ (143 aa).

SpoVT-AbrB domains are found at residues 5–47 and 76–119; these read TYTP…SARE and ASDE…DSES.

Belongs to the MraZ family. In terms of assembly, forms oligomers.

The protein localises to the cytoplasm. It localises to the nucleoid. This chain is Transcriptional regulator MraZ, found in Micrococcus luteus (strain ATCC 4698 / DSM 20030 / JCM 1464 / CCM 169 / CCUG 5858 / IAM 1056 / NBRC 3333 / NCIMB 9278 / NCTC 2665 / VKM Ac-2230) (Micrococcus lysodeikticus).